Consider the following 383-residue polypeptide: Putative glutamate--cysteine ligase 2 (383 aa).

The protein belongs to the glutamate--cysteine ligase type 2 family. YbdK subfamily.

It catalyses the reaction L-cysteine + L-glutamate + ATP = gamma-L-glutamyl-L-cysteine + ADP + phosphate + H(+). ATP-dependent carboxylate-amine ligase which exhibits weak glutamate--cysteine ligase activity. The polypeptide is Putative glutamate--cysteine ligase 2 (Legionella pneumophila subsp. pneumophila (strain Philadelphia 1 / ATCC 33152 / DSM 7513)).